We begin with the raw amino-acid sequence, 124 residues long: Small ribosomal subunit protein uS12 (124 aa).

Asp89 is subject to 3-methylthioaspartic acid.

Belongs to the universal ribosomal protein uS12 family. As to quaternary structure, part of the 30S ribosomal subunit. Contacts proteins S8 and S17. May interact with IF1 in the 30S initiation complex.

Its function is as follows. With S4 and S5 plays an important role in translational accuracy. Interacts with and stabilizes bases of the 16S rRNA that are involved in tRNA selection in the A site and with the mRNA backbone. Located at the interface of the 30S and 50S subunits, it traverses the body of the 30S subunit contacting proteins on the other side and probably holding the rRNA structure together. The combined cluster of proteins S8, S12 and S17 appears to hold together the shoulder and platform of the 30S subunit. This is Small ribosomal subunit protein uS12 from Koribacter versatilis (strain Ellin345).